Reading from the N-terminus, the 227-residue chain is Orotate phosphoribosyltransferase 2 (227 aa).

Residue 41-42 (FF) coordinates orotate. 5-phospho-alpha-D-ribose 1-diphosphate-binding positions include 79–80 (YK), Arg-109, Lys-110, Lys-113, His-115, and 135–143 (DDVMTAGTA). Residues Thr-139 and Arg-167 each coordinate orotate.

The protein belongs to the purine/pyrimidine phosphoribosyltransferase family. PyrE subfamily. As to quaternary structure, homodimer.

It carries out the reaction orotidine 5'-phosphate + diphosphate = orotate + 5-phospho-alpha-D-ribose 1-diphosphate. It participates in pyrimidine metabolism; UMP biosynthesis via de novo pathway; UMP from orotate: step 1/2. In terms of biological role, catalyzes the transfer of a ribosyl phosphate group from 5-phosphoribose 1-diphosphate to orotate, leading to the formation of orotidine monophosphate (OMP). This Saccharomyces cerevisiae (strain ATCC 204508 / S288c) (Baker's yeast) protein is Orotate phosphoribosyltransferase 2 (URA10).